The primary structure comprises 329 residues: GTPase Obg (329 aa).

Residues 2–160 enclose the Obg domain; that stretch reads YNFKDSVSIT…LNVRLELFLV (159 aa). Residues 161-327 form the OBG-type G domain; it reads ADIGLVGPPN…LIKEFFILAK (167 aa). GTP-binding positions include 167-174, 192-196, 213-216, 280-283, and 308-310; these read GPPNAGKS, FTTKI, DIPG, NKLD, and SIY. The Mg(2+) site is built by serine 174 and threonine 194.

This sequence belongs to the TRAFAC class OBG-HflX-like GTPase superfamily. OBG GTPase family. As to quaternary structure, monomer. Mg(2+) is required as a cofactor.

The protein localises to the cytoplasm. An essential GTPase which binds GTP, GDP and possibly (p)ppGpp with moderate affinity, with high nucleotide exchange rates and a fairly low GTP hydrolysis rate. Plays a role in control of the cell cycle, stress response, ribosome biogenesis and in those bacteria that undergo differentiation, in morphogenesis control. This Borrelia garinii subsp. bavariensis (strain ATCC BAA-2496 / DSM 23469 / PBi) (Borreliella bavariensis) protein is GTPase Obg.